The chain runs to 1342 residues: DNA-directed RNA polymerase subunit beta (1342 aa).

It belongs to the RNA polymerase beta chain family. The RNAP catalytic core consists of 2 alpha, 1 beta, 1 beta' and 1 omega subunit. When a sigma factor is associated with the core the holoenzyme is formed, which can initiate transcription.

It catalyses the reaction RNA(n) + a ribonucleoside 5'-triphosphate = RNA(n+1) + diphosphate. Its function is as follows. DNA-dependent RNA polymerase catalyzes the transcription of DNA into RNA using the four ribonucleoside triphosphates as substrates. The protein is DNA-directed RNA polymerase subunit beta of Pseudoalteromonas atlantica (strain T6c / ATCC BAA-1087).